The primary structure comprises 65 residues: Large ribosomal subunit protein bL35 (65 aa).

A compositionally biased stretch (basic residues) spans methionine 1–lysine 16. The interval methionine 1–serine 24 is disordered.

Belongs to the bacterial ribosomal protein bL35 family.

The protein is Large ribosomal subunit protein bL35 of Leuconostoc mesenteroides subsp. mesenteroides (strain ATCC 8293 / DSM 20343 / BCRC 11652 / CCM 1803 / JCM 6124 / NCDO 523 / NBRC 100496 / NCIMB 8023 / NCTC 12954 / NRRL B-1118 / 37Y).